A 379-amino-acid polypeptide reads, in one-letter code: Chaperone protein DnaJ (379 aa).

The 66-residue stretch at 5–70 (DYYEVLGVEK…QKRAAYDQYG (66 aa)) folds into the J domain. A CR-type zinc finger spans residues 133-211 (GKSVEIRVPT…CHGQGRVEKT (79 aa)). Cysteine 146, cysteine 149, cysteine 163, cysteine 166, cysteine 185, cysteine 188, cysteine 199, and cysteine 202 together coordinate Zn(2+). CXXCXGXG motif repeat units follow at residues 146 to 153 (CDTCDGSG), 163 to 170 (CTTCHGQG), 185 to 192 (CPTCGGKG), and 199 to 206 (CDVCHGQG).

This sequence belongs to the DnaJ family. Homodimer. It depends on Zn(2+) as a cofactor.

The protein resides in the cytoplasm. Participates actively in the response to hyperosmotic and heat shock by preventing the aggregation of stress-denatured proteins and by disaggregating proteins, also in an autonomous, DnaK-independent fashion. Unfolded proteins bind initially to DnaJ; upon interaction with the DnaJ-bound protein, DnaK hydrolyzes its bound ATP, resulting in the formation of a stable complex. GrpE releases ADP from DnaK; ATP binding to DnaK triggers the release of the substrate protein, thus completing the reaction cycle. Several rounds of ATP-dependent interactions between DnaJ, DnaK and GrpE are required for fully efficient folding. Also involved, together with DnaK and GrpE, in the DNA replication of plasmids through activation of initiation proteins. The chain is Chaperone protein DnaJ from Pseudoalteromonas atlantica (strain T6c / ATCC BAA-1087).